Here is a 447-residue protein sequence, read N- to C-terminus: MIKIYDTMTRSLRKFVPLTENTVNIYVCGPTVYNYIHIGNARSAVAFDTIRRYFEYTGYQVNYISNFTDVDDKIIKAATQAGVSPKELSDRFIAAFIEDTKALGVKPATQNPRVMDYIAEIISFVESLIEKDFAYEADGDVYFRVEKSEHYAKLANKTLSELEVGASGRTDAETALKENPLDFALWKSAKAGEVSWDSPWGFGRPGWHIECSVMATEILGDTIDIHGGGADLEFPHHTNEIAQSEAKTGKTFANYWMHNGFVTVDNEKMSKSLGNFVTVHDMLQTVDGQVLRFFLATQQYRKPINFTEKTIHDAEINLKYLKNTLQQPLTETADEQELKQFVIAFQDAMDDDFNTANGITVVFDMAKWINSGSYTEPVKSAFEKMLAVFGIIFEEEVLEVDIEALIAKRQEARANRDFATADAIRDQLAVQGIKLLDTKDGVRWLRD.

Residue Cys-28 participates in Zn(2+) binding. The 'HIGH' region motif lies at 30-40; sequence PTVYNYIHIGN. Zn(2+) contacts are provided by Cys-211, His-236, and Glu-240. Positions 268 to 272 match the 'KMSKS' region motif; the sequence is KMSKS. Residue Lys-271 participates in ATP binding.

This sequence belongs to the class-I aminoacyl-tRNA synthetase family. In terms of assembly, monomer. The cofactor is Zn(2+).

Its subcellular location is the cytoplasm. It catalyses the reaction tRNA(Cys) + L-cysteine + ATP = L-cysteinyl-tRNA(Cys) + AMP + diphosphate. The polypeptide is Cysteine--tRNA ligase (Streptococcus pyogenes serotype M1).